A 149-amino-acid polypeptide reads, in one-letter code: Sec-independent protein translocase protein TatB (149 aa).

The helical transmembrane segment at 1–21 (MFDIGFTELIVIGIVALVVVG) threads the bilayer. The tract at residues 92-149 (VDMLDKSVRNEPQNAQTPPQTADAEPAQPDVRQQTLPLEEPDQNRAAGEPSSTSTRPA) is disordered. Polar residues predominate over residues 101–111 (NEPQNAQTPPQ).

This sequence belongs to the TatB family. In terms of assembly, the Tat system comprises two distinct complexes: a TatABC complex, containing multiple copies of TatA, TatB and TatC subunits, and a separate TatA complex, containing only TatA subunits. Substrates initially bind to the TatABC complex, which probably triggers association of the separate TatA complex to form the active translocon.

It is found in the cell inner membrane. Its function is as follows. Part of the twin-arginine translocation (Tat) system that transports large folded proteins containing a characteristic twin-arginine motif in their signal peptide across membranes. Together with TatC, TatB is part of a receptor directly interacting with Tat signal peptides. TatB may form an oligomeric binding site that transiently accommodates folded Tat precursor proteins before their translocation. The sequence is that of Sec-independent protein translocase protein TatB from Thiobacillus denitrificans (strain ATCC 25259 / T1).